Consider the following 374-residue polypeptide: tRNA-specific 2-thiouridylase MnmA (374 aa).

ATP-binding positions include 10–17 and leucine 36; that span reads AMSGGVDS. Cysteine 111 (nucleophile) is an active-site residue. A disulfide bridge connects residues cysteine 111 and cysteine 209. Glycine 135 serves as a coordination point for ATP. Residues 159-161 form an interaction with tRNA region; the sequence is KDQ. Cysteine 209 serves as the catalytic Cysteine persulfide intermediate.

The protein belongs to the MnmA/TRMU family.

The protein localises to the cytoplasm. The catalysed reaction is S-sulfanyl-L-cysteinyl-[protein] + uridine(34) in tRNA + AH2 + ATP = 2-thiouridine(34) in tRNA + L-cysteinyl-[protein] + A + AMP + diphosphate + H(+). Functionally, catalyzes the 2-thiolation of uridine at the wobble position (U34) of tRNA, leading to the formation of s(2)U34. The protein is tRNA-specific 2-thiouridylase MnmA of Acidobacterium capsulatum (strain ATCC 51196 / DSM 11244 / BCRC 80197 / JCM 7670 / NBRC 15755 / NCIMB 13165 / 161).